A 180-amino-acid chain; its full sequence is Protein YOP1 (180 aa).

Ser-2 carries the N-acetylserine modification. The interaction with YIP1 stretch occupies residues 2–17; that stretch reads SEYASSIHSQMKQFDT. Residues 2–35 are Cytoplasmic-facing; sequence SEYASSIHSQMKQFDTKYSGNRILQQLENKTNLP. Residues 36–55 traverse the membrane as a helical segment; the sequence is KSYLVAGLGFAYLLLIFINV. The Lumenal segment spans residues 56-57; sequence GG. A helical membrane pass occupies residues 58–78; that stretch reads VGEILSNFAGFVLPAYLSLVA. The Cytoplasmic portion of the chain corresponds to 79-88; the sequence is LKTPTSTDDT. The chain crosses the membrane as a helical span at residues 89 to 105; it reads QLLTYWIVFSFLSVIEF. The Lumenal portion of the chain corresponds to 106–108; sequence WSK. Residues 109-127 form a helical membrane-spanning segment; that stretch reads AILYLIPFYWFLKTVFLIY. Over 128–180 the chain is Cytoplasmic; sequence IALPQTGGARMIYQKIVAPLTDRYILRDVSKTEKDEIRASVNEASKATGASVH.

Belongs to the DP1 family. Oligomer. Interacts with YIP1.

It localises to the endoplasmic reticulum membrane. The protein localises to the golgi apparatus membrane. In terms of biological role, required to generate and maintain the structure of the tubular endoplasmic reticulum network and the vacuole. Induces high curvature in membranes and causes membrane tubule formation. Involved in membrane/vesicle trafficking. The sequence is that of Protein YOP1 (YOP1) from Saccharomyces cerevisiae (strain ATCC 204508 / S288c) (Baker's yeast).